We begin with the raw amino-acid sequence, 93 residues long: U8-theraphotoxin-Hs1b (93 aa).

Positions 1–18 are cleaved as a signal peptide; the sequence is MKAILLLAIFSVLTVAIC. Intrachain disulfides connect Cys-40-Cys-54, Cys-40-Cys-81, Cys-53-Cys-66, and Cys-84-Cys-91.

The protein belongs to the neurotoxin 27 (Jztx-72) family. ICK-72 subfamily. In terms of tissue distribution, expressed by the venom gland.

It is found in the secreted. In terms of biological role, probable neurotoxin with ion channel impairing activity. The protein is U8-theraphotoxin-Hs1b of Cyriopagopus schmidti (Chinese bird spider).